The primary structure comprises 654 residues: DNA-directed RNA polymerase III subunit RPC3 (654 aa).

Threonine 27 bears the Phosphothreonine mark. 2 disordered regions span residues 381–401 and 422–448; these read LSRK…ASLP and KSLQ…EDPH. A phosphoserine mark is found at serine 392 and serine 394. The segment covering 429–444 has biased composition (acidic residues); sequence DTQEEDEEEEDLDADT. Residues 581 to 602 form a leucine-zipper region; sequence LEWNMANLLFKKEKLKQENSTL.

This sequence belongs to the eukaryotic RPC3/POLR3C RNA polymerase subunit family. In terms of assembly, component of the RNA polymerase III (Pol III) complex consisting of 17 subunits.

It is found in the cytoplasm. The protein resides in the nucleus. Functionally, DNA-dependent RNA polymerase catalyzes the transcription of DNA into RNA using the four ribonucleoside triphosphates as substrates. Specific core component of RNA polymerase III which synthesizes small RNAs, such as 5S rRNA and tRNAs. In Saccharomyces cerevisiae (strain ATCC 204508 / S288c) (Baker's yeast), this protein is DNA-directed RNA polymerase III subunit RPC3 (RPC82).